Reading from the N-terminus, the 98-residue chain is Integration host factor subunit alpha (98 aa).

The disordered stretch occupies residues 52–73; sequence FDLREKNQRPGRNPKTGEDIPI.

The protein belongs to the bacterial histone-like protein family. Heterodimer of an alpha and a beta chain.

Its function is as follows. This protein is one of the two subunits of integration host factor, a specific DNA-binding protein that functions in genetic recombination as well as in transcriptional and translational control. The chain is Integration host factor subunit alpha from Aeromonas hydrophila subsp. hydrophila (strain ATCC 7966 / DSM 30187 / BCRC 13018 / CCUG 14551 / JCM 1027 / KCTC 2358 / NCIMB 9240 / NCTC 8049).